A 261-amino-acid polypeptide reads, in one-letter code: 5'-nucleotidase SurE (261 aa).

The a divalent metal cation site is built by Asp10, Asp11, Ser41, and Asn96.

It belongs to the SurE nucleotidase family. The cofactor is a divalent metal cation.

Its subcellular location is the cytoplasm. It carries out the reaction a ribonucleoside 5'-phosphate + H2O = a ribonucleoside + phosphate. In terms of biological role, nucleotidase that shows phosphatase activity on nucleoside 5'-monophosphates. The chain is 5'-nucleotidase SurE from Methanococcoides burtonii (strain DSM 6242 / NBRC 107633 / OCM 468 / ACE-M).